Reading from the N-terminus, the 845-residue chain is U-box domain-containing protein 52 (845 aa).

Disordered regions lie at residues 180–210 and 229–258; these read RPSE…LPPE and SPAL…EVST. The span at 187-204 shows a compositional bias: low complexity; sequence SGSIRFERSSSTSGSTDS. The segment covering 236-251 has biased composition (polar residues); it reads MGSNAVAQMDTSSSGT. A coiled-coil region spans residues 351–468; it reads SITDNQVNLN…REKDKLQASL (118 aa). Positions 490-754 constitute a Protein kinase domain; the sequence is FAENLKIGIG…DLKDQIIPAL (265 aa). ATP-binding positions include 496–504 and lysine 517; that span reads IGIGAYGSV. Aspartate 612 acts as the Proton acceptor in catalysis. A U-box domain is found at 774 to 845; the sequence is GPPSHFICPL…AIMEWKSNKR (72 aa).

Belongs to the protein kinase superfamily. Ser/Thr protein kinase family.

The enzyme catalyses L-seryl-[protein] + ATP = O-phospho-L-seryl-[protein] + ADP + H(+). The catalysed reaction is L-threonyl-[protein] + ATP = O-phospho-L-threonyl-[protein] + ADP + H(+). It carries out the reaction S-ubiquitinyl-[E2 ubiquitin-conjugating enzyme]-L-cysteine + [acceptor protein]-L-lysine = [E2 ubiquitin-conjugating enzyme]-L-cysteine + N(6)-ubiquitinyl-[acceptor protein]-L-lysine.. Its pathway is protein modification; protein ubiquitination. In terms of biological role, functions as an E3 ubiquitin ligase. The sequence is that of U-box domain-containing protein 52 (PUB52) from Arabidopsis thaliana (Mouse-ear cress).